The following is a 430-amino-acid chain: Serine--tRNA ligase (430 aa).

236-238 (TAE) is an L-serine binding site. 267–269 (RSE) provides a ligand contact to ATP. Glu290 lines the L-serine pocket. 354 to 357 (EISS) contributes to the ATP binding site. Ser390 contacts L-serine.

The protein belongs to the class-II aminoacyl-tRNA synthetase family. Type-1 seryl-tRNA synthetase subfamily. In terms of assembly, homodimer. The tRNA molecule binds across the dimer.

It localises to the cytoplasm. The enzyme catalyses tRNA(Ser) + L-serine + ATP = L-seryl-tRNA(Ser) + AMP + diphosphate + H(+). It catalyses the reaction tRNA(Sec) + L-serine + ATP = L-seryl-tRNA(Sec) + AMP + diphosphate + H(+). It functions in the pathway aminoacyl-tRNA biosynthesis; selenocysteinyl-tRNA(Sec) biosynthesis; L-seryl-tRNA(Sec) from L-serine and tRNA(Sec): step 1/1. Its function is as follows. Catalyzes the attachment of serine to tRNA(Ser). Is also able to aminoacylate tRNA(Sec) with serine, to form the misacylated tRNA L-seryl-tRNA(Sec), which will be further converted into selenocysteinyl-tRNA(Sec). The protein is Serine--tRNA ligase of Idiomarina loihiensis (strain ATCC BAA-735 / DSM 15497 / L2-TR).